The following is a 190-amino-acid chain: Guanylate kinase (190 aa).

The 179-residue stretch at 8 to 186 folds into the Guanylate kinase-like domain; sequence ARPTVLTGPS…ALAELEKQMN (179 aa). Position 15 to 22 (15 to 22) interacts with ATP; the sequence is GPSGVGKG.

It belongs to the guanylate kinase family.

It localises to the cytoplasm. It carries out the reaction GMP + ATP = GDP + ADP. The catalysed reaction is dZMP + ATP = dZDP + ADP. The protein operates within purine metabolism. Essential for recycling GMP and indirectly, cGMP. Functionally, (Microbial infection) Catalyzes the phosphorylation of dZMP to dZDP, when the bacterium is infected by a phage that produces the substrate for the synthesis of dZTP (2- amino-2'-deoxyadenosine 5'-triphosphate), which is then used by the phage as a DNA polymerase substrate. The sequence is that of Guanylate kinase from Synechococcus sp. (strain CC9311).